We begin with the raw amino-acid sequence, 346 residues long: D-fructose 1,6-bisphosphatase class 2/sedoheptulose 1,7-bisphosphatase (346 aa).

4 residues coordinate Mn(2+): Asp-33, Glu-57, Asp-97, and Glu-100. Residues 100-102 (EGT), Tyr-131, 176-178 (RDR), and 198-200 (DGD) contribute to the substrate site. Glu-225 contributes to the Mn(2+) binding site.

Belongs to the FBPase class 2 family. As to quaternary structure, homotetramer. It depends on Mn(2+) as a cofactor.

The enzyme catalyses beta-D-fructose 1,6-bisphosphate + H2O = beta-D-fructose 6-phosphate + phosphate. The catalysed reaction is D-sedoheptulose 1,7-bisphosphate + H2O = D-sedoheptulose 7-phosphate + phosphate. Its pathway is carbohydrate biosynthesis; Calvin cycle. Catalyzes the hydrolysis of fructose 1,6-bisphosphate (Fru 1,6-P2) and sedoheptulose 1,7-bisphosphate (Sed 1,7-P2) to fructose 6-phosphate and sedoheptulose 7-phosphate, respectively. The chain is D-fructose 1,6-bisphosphatase class 2/sedoheptulose 1,7-bisphosphatase from Gloeobacter violaceus (strain ATCC 29082 / PCC 7421).